The primary structure comprises 109 residues: Ribonuclease P protein component (109 aa).

The protein belongs to the RnpA family. As to quaternary structure, consists of a catalytic RNA component (M1 or rnpB) and a protein subunit.

It catalyses the reaction Endonucleolytic cleavage of RNA, removing 5'-extranucleotides from tRNA precursor.. Functionally, RNaseP catalyzes the removal of the 5'-leader sequence from pre-tRNA to produce the mature 5'-terminus. It can also cleave other RNA substrates such as 4.5S RNA. The protein component plays an auxiliary but essential role in vivo by binding to the 5'-leader sequence and broadening the substrate specificity of the ribozyme. This chain is Ribonuclease P protein component, found in Nitratiruptor sp. (strain SB155-2).